A 265-amino-acid chain; its full sequence is Cyclin-C (265 aa).

Residues 48 to 151 (IQVLGEQLKL…LLENLDCCLI (104 aa)) form the Cyclin N-terminal domain.

It belongs to the cyclin family. Cyclin C subfamily. In terms of assembly, component of the Cdk8 module of the Mediator complex.

Its subcellular location is the nucleus. In terms of biological role, component of the Mediator complex, a coactivator involved in regulated gene transcription of nearly all RNA polymerase II-dependent genes. Mediator functions as a bridge to convey information from gene-specific regulatory proteins to the basal RNA polymerase II transcription machinery. Mediator is recruited to promoters by direct interactions with regulatory proteins and serves as a scaffold for the assembly of a functional preinitiation complex with RNA polymerase II and the general transcription factors. Binds to and activates cyclin-dependent kinase Cdk8 that phosphorylates the CTD (C-terminal domain) of the large subunit of RNA polymerase II (RNAp II), which may inhibit the formation of a transcription initiation complex. In Aedes aegypti (Yellowfever mosquito), this protein is Cyclin-C (CycC).